A 579-amino-acid chain; its full sequence is Transcription factor COE2 (579 aa).

Positions 63-66 are interaction with DNA; it reads RKSN. A C5-type zinc finger spans residues 149-168; that stretch reads CRVLLTHEVMCSRCCEKKSC. 2 interaction with DNA regions span residues 195-202 and 234-237; these read NCLKTAGN and NNSK. Positions 260-343 constitute an IPT/TIG domain; that stretch reads PCIKAISPSE…KGAPGRFIYT (84 aa). 3 disordered regions span residues 442–482, 514–533, and 549–579; these read GVSI…YGSN, AIMP…LPFS, and LRPQ…VPPM. A compositionally biased stretch (polar residues) spans 449-459; sequence GQTSGQGYTRN. Composition is skewed to low complexity over residues 460 to 472 and 521 to 533; these read SSSL…PSSS and PGSS…LPFS.

It belongs to the COE family.

The protein localises to the nucleus. This chain is Transcription factor COE2 (coe2), found in Danio rerio (Zebrafish).